The following is a 154-amino-acid chain: Small heat shock protein C2 (154 aa).

The 112-residue stretch at 43 to 154 (STEKNLIPRT…GKTRKIEVKG (112 aa)) folds into the sHSP domain.

Belongs to the small heat shock protein (HSP20) family.

The polypeptide is Small heat shock protein C2 (hspC2) (Rickettsia felis (strain ATCC VR-1525 / URRWXCal2) (Rickettsia azadi)).